A 509-amino-acid polypeptide reads, in one-letter code: Ribonuclease Y (509 aa).

The chain crosses the membrane as a helical span at residues 5–25 (IIILLSVFCGIFFICFIICSS). The KH domain occupies 199–259 (TTNIVKLPSD…IRREIATRTL (61 aa)). Positions 325 to 418 (VLAHSIEVAK…VAIADSISAS (94 aa)) constitute an HD domain.

The protein belongs to the RNase Y family.

The protein localises to the cell membrane. In terms of biological role, endoribonuclease that initiates mRNA decay. In Mycoplasma capricolum subsp. capricolum (strain California kid / ATCC 27343 / NCTC 10154), this protein is Ribonuclease Y.